Consider the following 421-residue polypeptide: Polygalacturonase (421 aa).

An N-terminal signal peptide occupies residues 1 to 20 (MKFSTAIIVSFLFIADFCAA). N-linked (GlcNAc...) asparagine glycans are attached at residues Asn-156 and Asn-180. 2 PbH1 repeats span residues 178–204 (CKNI…HMGK) and 205–226 (STDV…SIGD). Catalysis depends on Asp-219, which acts as the Proton donor. The active site involves His-242. PbH1 repeat units follow at residues 258–279 (VEGI…RIKT) and 289–310 (VSDI…IIDQ). An N-linked (GlcNAc...) asparagine glycan is attached at Asn-265. The disordered stretch occupies residues 394–421 (PGAPAASTTATPAASKTATPAAGKSPAK).

Belongs to the glycosyl hydrolase 28 family. As to expression, pollen specific.

The protein localises to the secreted. It localises to the cell wall. It carries out the reaction (1,4-alpha-D-galacturonosyl)n+m + H2O = (1,4-alpha-D-galacturonosyl)n + (1,4-alpha-D-galacturonosyl)m.. Functionally, may function in the depolymerization of the pectin in its walls during pollen tube elongation, or in that of the pistil during pollination. This Medicago sativa (Alfalfa) protein is Polygalacturonase.